Reading from the N-terminus, the 636-residue chain is Carbon monoxide dehydrogenase 2 (636 aa).

[4Fe-4S] cluster contacts are provided by Cys39, Cys47, Cys48, Cys51, Cys56, and Cys70. [Ni-4Fe-5S] cluster contacts are provided by His261, Cys295, Cys333, Cys446, Cys476, and Cys526.

This sequence belongs to the Ni-containing carbon monoxide dehydrogenase family. Homodimer. [4Fe-4S] cluster serves as cofactor. Requires [Ni-4Fe-5S] cluster as cofactor.

The protein resides in the cytoplasm. It localises to the cell membrane. The catalysed reaction is CO + 2 oxidized [2Fe-2S]-[ferredoxin] + H2O = 2 reduced [2Fe-2S]-[ferredoxin] + CO2 + 2 H(+). Its activity is regulated as follows. Inactivated by O(2). Its function is as follows. CODH oxidizes carbon monoxide coupled, via CooF, to the reduction of a hydrogen cation by a hydrogenase (possibly CooH). The chain is Carbon monoxide dehydrogenase 2 (cooS2) from Carboxydothermus hydrogenoformans (strain ATCC BAA-161 / DSM 6008 / Z-2901).